A 97-amino-acid chain; its full sequence is MSIRPLHDRVIVKRKEVETKSAGGIVLTGSAAAKSTRGEIIAVGKGRILENGTVQPLDVKVGDIVIFNDGYGVKTEKIDNEEVLIMPESDILAIVEA.

The protein belongs to the GroES chaperonin family. In terms of assembly, heptamer of 7 subunits arranged in a ring. Interacts with the chaperonin GroEL.

The protein resides in the cytoplasm. Together with the chaperonin GroEL, plays an essential role in assisting protein folding. The GroEL-GroES system forms a nano-cage that allows encapsulation of the non-native substrate proteins and provides a physical environment optimized to promote and accelerate protein folding. GroES binds to the apical surface of the GroEL ring, thereby capping the opening of the GroEL channel. In Klebsiella pneumoniae subsp. pneumoniae (strain ATCC 700721 / MGH 78578), this protein is Co-chaperonin GroES.